A 75-amino-acid chain; its full sequence is Large ribosomal subunit protein bL28 (75 aa).

The protein belongs to the bacterial ribosomal protein bL28 family.

The protein is Large ribosomal subunit protein bL28 of Buchnera aphidicola subsp. Acyrthosiphon pisum (strain APS) (Acyrthosiphon pisum symbiotic bacterium).